The primary structure comprises 133 residues: Small ribosomal subunit protein uS9 (133 aa).

Residues 97–113 (SKQELKSHGFLTRDPRK) are compositionally biased toward basic and acidic residues. A disordered region spans residues 97–133 (SKQELKSHGFLTRDPRKKERKKYGHKKARKSFQFSKR). Over residues 114 to 133 (KERKKYGHKKARKSFQFSKR) the composition is skewed to basic residues.

It belongs to the universal ribosomal protein uS9 family.

This is Small ribosomal subunit protein uS9 from Chlamydia abortus (strain DSM 27085 / S26/3) (Chlamydophila abortus).